We begin with the raw amino-acid sequence, 442 residues long: Cytochrome c biogenesis CcmF C-terminal-like mitochondrial protein (442 aa).

Helical transmembrane passes span 6–26, 39–59, and 122–142; these read NFFF…PVLL, PFFN…LVYL, and YLES…FFLA. A disordered region spans residues 151–175; sequence RARRRKGQTLRPNGNEQRRNDKMRC. Residues 166–175 show a composition bias toward basic and acidic residues; sequence EQRRNDKMRC. Residues 411-431 form a helical membrane-spanning segment; that stretch reads FIFFIWIGFMLASLGGLPSLL.

This sequence belongs to the CcmF/CycK/Ccl1/NrfE/CcsA family. In terms of assembly, interacts with CCMFN2.

Its subcellular location is the mitochondrion inner membrane. Forms a complex with CCMFN1, CCMFN2 and CCMH that performs the assembly of heme with c-type apocytochromes in mitochondria. The sequence is that of Cytochrome c biogenesis CcmF C-terminal-like mitochondrial protein (CCMFC) from Arabidopsis thaliana (Mouse-ear cress).